We begin with the raw amino-acid sequence, 163 residues long: Sorting nexin-3 (163 aa).

Residues 1-20 (MASDQDNSGLDAPGSQFHRP) form a disordered region. The 118-residue stretch at 42–159 (NFLEIEVRNP…AAFVQDPNWD (118 aa)) folds into the PX domain. 5 residues coordinate a 1,2-diacyl-sn-glycero-3-phospho-(1D-myo-inositol-3-phosphate): Arg-85, Ser-87, Lys-111, Arg-116, and Arg-125.

Belongs to the sorting nexin family.

Its subcellular location is the cytoplasm. It is found in the golgi apparatus membrane. The protein localises to the prevacuolar compartment membrane. In terms of biological role, required for retention of late Golgi membrane proteins. Component of the retrieval machinery that functions by direct interaction with the cytosolic tails of certain TGN membrane proteins during the sorting/budding process at the prevacuolar compartment. Binds phosphatidylinositol 3-phosphate (PtdIns(P3)). The chain is Sorting nexin-3 (SNX3) from Gibberella zeae (strain ATCC MYA-4620 / CBS 123657 / FGSC 9075 / NRRL 31084 / PH-1) (Wheat head blight fungus).